The chain runs to 320 residues: MQTRNTLSWIKEEITRSISVSLMIYIITWASISNAYPIFAQQGYENPREATGRIVCANCHLANKPVDIEVPQAVLPDTVFEAVVRIPYDMQLKQVLANGKKGGLNVGAVLILPEGFELAPPDRISPEMKEKIGNLSFQNYRPTQKKILVIGPVPGQKYSEITFPILSPDPATNKDVHFLKYPIYVGGNRGRGQIYPDGRKSNNTVYNATAAGIVSKILRKEKGGYEITIVDASDGRQVVDIIPPGPELLVSEGESIKLDQPLTSNPNVGGFGQGDAEIVLQDPSRVQGLLFFLASVVLAQIFLVLKKKQFEKVQLSEMNF.

A signal peptide spans 1 to 35 (MQTRNTLSWIKEEITRSISVSLMIYIITWASISNA). Y36, C56, C59, and H60 together coordinate heme. The helical transmembrane segment at 286 to 306 (VQGLLFFLASVVLAQIFLVLK) threads the bilayer.

Belongs to the cytochrome f family. As to quaternary structure, the 4 large subunits of the cytochrome b6-f complex are cytochrome b6, subunit IV (17 kDa polypeptide, petD), cytochrome f and the Rieske protein, while the 4 small subunits are PetG, PetL, PetM and PetN. The complex functions as a dimer. Requires heme as cofactor.

Its subcellular location is the plastid. It is found in the chloroplast thylakoid membrane. Functionally, component of the cytochrome b6-f complex, which mediates electron transfer between photosystem II (PSII) and photosystem I (PSI), cyclic electron flow around PSI, and state transitions. In Carica papaya (Papaya), this protein is Cytochrome f.